Here is a 283-residue protein sequence, read N- to C-terminus: Protease HtpX homolog (283 aa).

The next 2 membrane-spanning stretches (helical) occupy residues 7–27 (TAVL…VLGG) and 29–49 (QGMA…YWFS). His-131 serves as a coordination point for Zn(2+). Glu-132 is an active-site residue. His-135 provides a ligand contact to Zn(2+). Transmembrane regions (helical) follow at residues 146-166 (ISAT…FFGG) and 177-197 (IAGI…QMAI). Glu-202 is a Zn(2+) binding site.

Belongs to the peptidase M48B family. It depends on Zn(2+) as a cofactor.

Its subcellular location is the cell inner membrane. In Methylibium petroleiphilum (strain ATCC BAA-1232 / LMG 22953 / PM1), this protein is Protease HtpX homolog.